The primary structure comprises 252 residues: Phosphoglycolate phosphatase (252 aa).

Asp-13 (nucleophile) is an active-site residue. Positions 13, 15, and 192 each coordinate Mg(2+).

The protein belongs to the HAD-like hydrolase superfamily. CbbY/CbbZ/Gph/YieH family. Monomer. Mg(2+) is required as a cofactor. It depends on chloride as a cofactor.

It catalyses the reaction 2-phosphoglycolate + H2O = glycolate + phosphate. It functions in the pathway organic acid metabolism; glycolate biosynthesis; glycolate from 2-phosphoglycolate: step 1/1. Its function is as follows. Specifically catalyzes the dephosphorylation of 2-phosphoglycolate. Is involved in the dissimilation of the intracellular 2-phosphoglycolate formed during the DNA repair of 3'-phosphoglycolate ends, a major class of DNA lesions induced by oxidative stress. The protein is Phosphoglycolate phosphatase of Shigella flexneri.